Here is an 837-residue protein sequence, read N- to C-terminus: Valine--tRNA ligase (837 aa).

The 'HIGH' region signature appears at proline 46 to histidine 56. Residues lysine 514–serine 518 carry the 'KMSKS' region motif. Lysine 517 lines the ATP pocket. Residues valine 767 to histidine 837 adopt a coiled-coil conformation.

The protein belongs to the class-I aminoacyl-tRNA synthetase family. ValS type 1 subfamily. In terms of assembly, monomer.

It is found in the cytoplasm. It carries out the reaction tRNA(Val) + L-valine + ATP = L-valyl-tRNA(Val) + AMP + diphosphate. In terms of biological role, catalyzes the attachment of valine to tRNA(Val). As ValRS can inadvertently accommodate and process structurally similar amino acids such as threonine, to avoid such errors, it has a 'posttransfer' editing activity that hydrolyzes mischarged Thr-tRNA(Val) in a tRNA-dependent manner. This Mycoplasma genitalium (strain ATCC 33530 / DSM 19775 / NCTC 10195 / G37) (Mycoplasmoides genitalium) protein is Valine--tRNA ligase.